Here is a 183-residue protein sequence, read N- to C-terminus: Large ribosomal subunit protein uL22 (183 aa).

This sequence belongs to the universal ribosomal protein uL22 family.

This chain is Large ribosomal subunit protein uL22 (RPL17), found in Podocoryna carnea (Hydrozoan).